The primary structure comprises 120 residues: uncharacterized protein (120 aa).

The chain crosses the membrane as a helical span at residues 93–109; the sequence is LCVGISTTMIIQVLFLL.

It is found in the membrane. This is an uncharacterized protein from Saccharomyces cerevisiae (strain ATCC 204508 / S288c) (Baker's yeast).